The following is a 513-amino-acid chain: L-threonine dehydratase biosynthetic IlvA (513 aa).

An N6-(pyridoxal phosphate)lysine modification is found at Lys-63. Pyridoxal 5'-phosphate is bound by residues Asn-90, 189-193 (GGGGL), and Ser-316. ACT-like domains lie at 340 to 411 (ALLA…DMSD) and 433 to 504 (RLYT…DVTK).

It belongs to the serine/threonine dehydratase family. As to quaternary structure, homotetramer. It depends on pyridoxal 5'-phosphate as a cofactor.

It carries out the reaction L-threonine = 2-oxobutanoate + NH4(+). Its pathway is amino-acid biosynthesis; L-isoleucine biosynthesis; 2-oxobutanoate from L-threonine: step 1/1. Its function is as follows. Catalyzes the anaerobic formation of alpha-ketobutyrate and ammonia from threonine in a two-step reaction. The first step involved a dehydration of threonine and a production of enamine intermediates (aminocrotonate), which tautomerizes to its imine form (iminobutyrate). Both intermediates are unstable and short-lived. The second step is the nonenzymatic hydrolysis of the enamine/imine intermediates to form 2-ketobutyrate and free ammonia. In the low water environment of the cell, the second step is accelerated by RidA. The protein is L-threonine dehydratase biosynthetic IlvA (ilvA) of Haemophilus influenzae (strain ATCC 51907 / DSM 11121 / KW20 / Rd).